Here is a 360-residue protein sequence, read N- to C-terminus: Protein phosphatase 1L (360 aa).

The Extracellular segment spans residues 1 to 25 (MIEDTMTLLSLLGRIMRYFLLRPET). The helical transmembrane segment at 26–42 (LFLLCISLALWSYFFHT) threads the bilayer. Residues 43-360 (DEVKTIVKSS…FRNSSKTEEQ (318 aa)) are Cytoplasmic-facing. Positions 92-351 (NVAVYSIQGR…DNITVMVVKF (260 aa)) constitute a PPM-type phosphatase domain. Mn(2+)-binding residues include aspartate 128, glycine 129, aspartate 302, and aspartate 342.

It belongs to the PP2C family. Interacts with MAP3K7/TAK1 and MAP3K5. The cofactor is Mg(2+). Mn(2+) is required as a cofactor.

It is found in the membrane. The catalysed reaction is O-phospho-L-seryl-[protein] + H2O = L-seryl-[protein] + phosphate. It catalyses the reaction O-phospho-L-threonyl-[protein] + H2O = L-threonyl-[protein] + phosphate. Functionally, acts as a suppressor of the SAPK signaling pathways by associating with and dephosphorylating MAP3K7/TAK1 and MAP3K5, and by attenuating the association between MAP3K7/TAK1 and MAP2K4 or MAP2K6. This chain is Protein phosphatase 1L (PPM1L), found in Bos taurus (Bovine).